The sequence spans 152 residues: Chemokine-like factor (152 aa).

The MARVEL domain maps to 13–133 (FCCTLKCFVK…DCALMCQKLR (121 aa)). The next 4 helical transmembrane spans lie at 19–39 (CFVKFLRLVVTVTSMIFFIVG), 46–66 (IVITGFEVTVIFCFLVLYTCG), 81–101 (VINSMVTALCMLIVSVLALIP), and 108–128 (ILGGVFGFLTVTCTIADCALM).

It belongs to the chemokine-like factor family. Ubiquitous.

The protein localises to the membrane. Its function is as follows. May play an important role in inflammation and regeneration of skeletal muscle. Essential for embryonic development. The sequence is that of Chemokine-like factor (Cklf) from Mus musculus (Mouse).